The chain runs to 98 residues: HssA/B-like protein 50 (98 aa).

Disordered stretches follow at residues 1–26 (MTLF…SFGS) and 68–98 (TRGS…CCGI). Over residues 84–98 (GHGGMGGGNGSCCGI) the composition is skewed to gly residues.

It belongs to the hssA/B family.

The protein is HssA/B-like protein 50 (hssl50) of Dictyostelium discoideum (Social amoeba).